A 354-amino-acid polypeptide reads, in one-letter code: Guanine nucleotide-binding protein G(i) subunit alpha-3 (354 aa).

A lipid anchor (N-myristoyl glycine) is attached at glycine 2. Cysteine 3 carries S-palmitoyl cysteine lipidation. The G-alpha domain maps to 32–354; the sequence is KEVKLLLLGA…KNNLKECGLY (323 aa). The tract at residues 35–48 is G1 motif; the sequence is KLLLLGAGESGKST. 25 residues coordinate GTP: glycine 42, glutamate 43, serine 44, glycine 45, lysine 46, serine 47, threonine 48, aspartate 150, serine 151, leucine 175, arginine 176, threonine 177, arginine 178, valine 179, lysine 180, threonine 181, valine 201, glycine 203, asparagine 269, lysine 270, aspartate 272, leucine 273, cysteine 325, alanine 326, and threonine 327. A Mg(2+)-binding site is contributed by serine 47. Residues 173 to 181 form a G2 motif region; the sequence is DVLRTRVKT. A Mg(2+)-binding site is contributed by threonine 181. A G3 motif region spans residues 196–205; it reads FKMFDVGGQR. Residues 265–272 are G4 motif; that stretch reads ILFLNKKD. The segment at 324–329 is G5 motif; sequence TCATDT.

The protein belongs to the G-alpha family. G(i/o/t/z) subfamily. In terms of assembly, heterotrimeric G proteins are composed of 3 units; alpha, beta and gamma. The alpha subunit contains the guanine nucleotide binding site. GTP binding causes dissociation of the heterotrimer, liberating the individual subunits so that they can interact with downstream effector proteins. Forms a complex with CCDC88A/GIV and EGFR which leads to enhanced EGFR signaling and triggering of cell migration; ligand stimulation is required for recruitment of GNAI3 to the complex. Interacts (inactive GDP-bound form) with CCDC88A/GIV (via GBA motif); the interaction leads to activation of GNAI3. Interacts (inactive GDP-bound form) with CCDC88C/DAPLE (via GBA motif); the interaction leads to activation of GNAI3. Interacts (inactive GDP-bound form) with NUCB1 (via GBA motif) and NUCB2 (via GBA motif); the interaction leads to activation of GNAI3. Interacts (inactive GDP-bound form) with PLCD4 (via GBA motif); the interaction leads to activation of GNAI3. Interacts with INSR; the interaction is probably mediated by CCDC88A/GIV. Interacts with GPSM1. Interacts (GDP-bound form) with GPSM2 (via GoLoco domains). Does not interact with RGS2. Interacts with RGS8 and RGS10; this strongly enhances the intrinsic GTPase activity. Interacts with RGS16; this strongly enhances the intrinsic GTPase activity. Interacts with RGS12. Interacts (via active GTP- or inactive GDP-bound form) with RGS14. Interacts (via active GTP-bound form) with TRPC5 (via ANK repeats) in a homotetrameric ion channel; the interaction is direct and activates the channel activity.

It is found in the cytoplasm. The protein resides in the cell membrane. The protein localises to the cytoskeleton. It localises to the microtubule organizing center. Its subcellular location is the centrosome. Functionally, heterotrimeric guanine nucleotide-binding proteins (G proteins) function as transducers downstream of G protein-coupled receptors (GPCRs) in numerous signaling cascades. The alpha chain contains the guanine nucleotide binding site and alternates between an active, GTP-bound state and an inactive, GDP-bound state. Signaling by an activated GPCR promotes GDP release and GTP binding. The alpha subunit has a low GTPase activity that converts bound GTP to GDP, thereby terminating the signal. Both GDP release and GTP hydrolysis are modulated by numerous regulatory proteins. Signaling is mediated via effector proteins, such as adenylate cyclase. Inhibits adenylate cyclase activity, leading to decreased intracellular cAMP levels. Stimulates the activity of receptor-regulated K(+) channels. The active GTP-bound form prevents the association of RGS14 with centrosomes and is required for the translocation of RGS14 from the cytoplasm to the plasma membrane. May play a role in cell division. The active GTP-bound form activates the calcium permeant TRPC5 ion channels. In Mus musculus (Mouse), this protein is Guanine nucleotide-binding protein G(i) subunit alpha-3 (Gnai3).